We begin with the raw amino-acid sequence, 855 residues long: Sucrose synthase 7 (855 aa).

Residues serine 279 to threonine 758 are GT-B glycosyltransferase.

It belongs to the glycosyltransferase 1 family. Plant sucrose synthase subfamily. As to expression, predominantly expressed in roots, flowers and immature seeds.

It is found in the cytoplasm. Its subcellular location is the membrane. The enzyme catalyses an NDP-alpha-D-glucose + D-fructose = a ribonucleoside 5'-diphosphate + sucrose + H(+). Its function is as follows. Sucrose-cleaving enzyme that provides UDP-glucose and fructose for various metabolic pathways. This chain is Sucrose synthase 7 (SUS7), found in Oryza sativa subsp. japonica (Rice).